The chain runs to 1077 residues: Carbamoyl phosphate synthase large chain (1077 aa).

The segment at 2 to 403 (PKRTDIKSIL…SLQKALRGLE (402 aa)) is carboxyphosphate synthetic domain. Residues arginine 129, arginine 169, glycine 175, glycine 176, glutamate 208, leucine 210, glutamate 215, glycine 241, isoleucine 242, histidine 243, glutamine 285, and glutamate 299 each contribute to the ATP site. The ATP-grasp 1 domain maps to 133-328 (DIAMKKIGLD…IAKIAAKLAV (196 aa)). Residues glutamine 285, glutamate 299, and asparagine 301 each contribute to the Mg(2+) site. Residues glutamine 285, glutamate 299, and asparagine 301 each contribute to the Mn(2+) site. Residues 404–553 (VGATGFDPKV…YSTYEEECES (150 aa)) form an oligomerization domain region. The tract at residues 554-936 (NPTSDRPKVM…AFSKAMLGSQ (383 aa)) is carbamoyl phosphate synthetic domain. Positions 679–870 (QQAVNRLGLK…LAKIAARVMV (192 aa)) constitute an ATP-grasp 2 domain. ATP contacts are provided by arginine 715, arginine 754, leucine 756, glutamate 761, glycine 786, valine 787, histidine 788, serine 789, glutamine 829, and glutamate 841. Positions 829, 841, and 843 each coordinate Mg(2+). The Mn(2+) site is built by glutamine 829, glutamate 841, and asparagine 843. The 141-residue stretch at 937–1077 (SGMKKSGRAL…MHAKIKNMKA (141 aa)) folds into the MGS-like domain. The segment at 937 to 1077 (SGMKKSGRAL…MHAKIKNMKA (141 aa)) is allosteric domain.

Belongs to the CarB family. As to quaternary structure, composed of two chains; the small (or glutamine) chain promotes the hydrolysis of glutamine to ammonia, which is used by the large (or ammonia) chain to synthesize carbamoyl phosphate. Tetramer of heterodimers (alpha,beta)4. Mg(2+) serves as cofactor. The cofactor is Mn(2+).

It carries out the reaction hydrogencarbonate + L-glutamine + 2 ATP + H2O = carbamoyl phosphate + L-glutamate + 2 ADP + phosphate + 2 H(+). It catalyses the reaction hydrogencarbonate + NH4(+) + 2 ATP = carbamoyl phosphate + 2 ADP + phosphate + 2 H(+). Its pathway is amino-acid biosynthesis; L-arginine biosynthesis; carbamoyl phosphate from bicarbonate: step 1/1. It participates in pyrimidine metabolism; UMP biosynthesis via de novo pathway; (S)-dihydroorotate from bicarbonate: step 1/3. In terms of biological role, large subunit of the glutamine-dependent carbamoyl phosphate synthetase (CPSase). CPSase catalyzes the formation of carbamoyl phosphate from the ammonia moiety of glutamine, carbonate, and phosphate donated by ATP, constituting the first step of 2 biosynthetic pathways, one leading to arginine and/or urea and the other to pyrimidine nucleotides. The large subunit (synthetase) binds the substrates ammonia (free or transferred from glutamine from the small subunit), hydrogencarbonate and ATP and carries out an ATP-coupled ligase reaction, activating hydrogencarbonate by forming carboxy phosphate which reacts with ammonia to form carbamoyl phosphate. This chain is Carbamoyl phosphate synthase large chain, found in Yersinia pestis.